A 210-amino-acid polypeptide reads, in one-letter code: DNA-directed RNA polymerases I, II, and III subunit RPABC1 (210 aa).

An N-acetylmethionine modification is found at M1. K81 is covalently cross-linked (Glycyl lysine isopeptide (Lys-Gly) (interchain with G-Cter in SUMO2)).

The protein belongs to the archaeal Rpo5/eukaryotic RPB5 RNA polymerase subunit family. Component of the RNA polymerase I (Pol I), RNA polymerase II (Pol II) and RNA polymerase III (Pol III) complexes consisting of at least 13, 12 and 17 subunits, respectively. Pol I complex consists of a ten-subunit catalytic core composed of POLR1A/RPA1, POLR1B/RPA2, POLR1C/RPAC1, POLR1D/RPAC2, POLR1H/RPA12, POLR2E/RPABC1, POLR2F/RPABC2, POLR2H/RPABC3, POLR2K/RPABC4 and POLR2L/RPABC5; a mobile stalk subunit POLR1F/RPA43 protruding from the core and additional subunits homologous to general transcription factors POLR1E/RPA49 and POLR1G/RPA34. Part of Pol I pre-initiation complex (PIC), in which Pol I core assembles with RRN3 and promoter-bound UTBF and SL1/TIF-IB complex. Pol II complex contains a ten-subunit catalytic core composed of POLR2A/RPB1, POLR2B/RPB2, POLR2C/RPB3, POLR2I/RPB9, POLR2J/RPB11, POLR2E/RPABC1, POLR2F/RPABC2, POLR2H/RPABC3, POLR2K/RPABC4 and POLR2L/RPABC5 and a mobile stalk composed of two subunits POLR2D/RPB4 and POLR2G/RPB7. Part of Pol II(G) complex, in which Pol II core associates with an additional subunit POLR2M; unlike conventional Pol II, Pol II(G) functions as a transcriptional repressor. Part of TBP-based Pol II pre-initiation complex (PIC), in which Pol II core assembles with general transcription factors and other specific initiation factors including GTF2E1, GTF2E2, GTF2F1, GTF2F2, TCEA1, ERCC2, ERCC3, GTF2H2, GTF2H3, GTF2H4, GTF2H5, GTF2A1, GTF2A2, GTF2B and TBP; this large multi-subunit PIC complex mediates DNA unwinding and targets Pol II core to the transcription start site where the first phosphodiester bond forms. In Pol II complex, this subunit is present in 2-fold molar excess over the other subunits. Pol III complex consists of a ten-subunit catalytic core composed of POLR3A/RPC1, POLR3B/RPC2, POLR1C/RPAC1, POLR1D/RPAC2, POLR3K/RPC10, POLR2E/RPABC1, POLR2F/RPABC2, POLR2H/RPABC3, POLR2K/RPABC4 and POLR2L/RPABC5; a mobile stalk composed of two subunits POLR3H/RPC8 and CRCP/RPC9, protruding from the core and functioning primarily in transcription initiation; and additional subunits homologous to general transcription factors of the RNA polymerase II machinery, POLR3C/RPC3-POLR3F/RPC6-POLR3G/RPC7 heterotrimer required for transcription initiation and POLR3D/RPC4-POLR3E/RPC5 heterodimer involved in both transcription initiation and termination. Component of the PAQosome complex which is responsible for the biogenesis of several protein complexes and which consists of R2TP complex members RUVBL1, RUVBL2, RPAP3 and PIH1D1, URI complex members PFDN2, PFDN6, PDRG1, UXT and URI1 as well as ASDURF, POLR2E and DNAAF10/WDR92. Interacts with URI1. In terms of assembly, (Microbial infection) Interacts with HBV protein X.

It is found in the nucleus. It localises to the nucleolus. In terms of biological role, DNA-dependent RNA polymerase catalyzes the transcription of DNA into RNA using the four ribonucleoside triphosphates as substrates. Common component of RNA polymerases I, II and III which synthesize ribosomal RNA precursors, mRNA precursors and many functional non-coding RNAs, and small RNAs, such as 5S rRNA and tRNAs, respectively. Pol II is the central component of the basal RNA polymerase II transcription machinery. Pols are composed of mobile elements that move relative to each other. In Pol II, POLR2E/RPABC1 is part of the lower jaw surrounding the central large cleft and thought to grab the incoming DNA template. This Homo sapiens (Human) protein is DNA-directed RNA polymerases I, II, and III subunit RPABC1.